A 2820-amino-acid polypeptide reads, in one-letter code: Neurofibromin (2820 aa).

Ala2 carries the N-acetylalanine modification. Ser866 and Ser878 each carry phosphoserine. The region spanning 1253–1463 (HLLYQLLWNM…DLARRFFLDI (211 aa)) is the Ras-GAP domain. The region spanning 1561 to 1719 (EKEEFKALKT…ATLALEEDLK (159 aa)) is the CRAL-TRIO domain. The segment at 1561–1818 (EKEEFKALKT…RTRWELSQPD (258 aa)) is lipid binding. A phosphoserine mark is found at Ser2169 and Ser2448. Residues 2457 to 2482 (YPIHHGDPSSRTLKETQPWSSPRGSE) are disordered. The span at 2458 to 2470 (PIHHGDPSSRTLK) shows a compositional bias: basic and acidic residues. Position 2495 is a phosphothreonine (Thr2495). Residues Ser2496, Ser2502, Ser2504, and Ser2524 each carry the phosphoserine modification. The Bipartite nuclear localization signal signature appears at 2536-2552 (KRQEMESGITTPPKMRR). A Phosphothreonine modification is found at Thr2546. 3 positions are modified to phosphoserine: Ser2578, Ser2783, and Ser2798. Positions 2768–2820 (TSQHSPGIDKENVELSPTTGHCNSGRTRHGSASQVQKQRSAGSFKRNSIKKIV) are disordered. The span at 2782–2808 (LSPTTGHCNSGRTRHGSASQVQKQRSA) shows a compositional bias: polar residues.

Interacts with HTR6. Interacts with SPRED2. In terms of processing, ubiquitinated by RNF7/RBX2, leading to its degradation.

The protein localises to the nucleus. It localises to the nucleolus. Its subcellular location is the cell membrane. Functionally, stimulates the GTPase activity of Ras. NF1 shows greater affinity for Ras GAP, but lower specific activity. May be a regulator of Ras activity. The chain is Neurofibromin (Nf1) from Rattus norvegicus (Rat).